The sequence spans 95 residues: Small ribosomal subunit protein bS18 (95 aa).

It belongs to the bacterial ribosomal protein bS18 family. Part of the 30S ribosomal subunit. Forms a tight heterodimer with protein bS6.

Its function is as follows. Binds as a heterodimer with protein bS6 to the central domain of the 16S rRNA, where it helps stabilize the platform of the 30S subunit. The polypeptide is Small ribosomal subunit protein bS18 (Rickettsia canadensis (strain McKiel)).